The primary structure comprises 92 residues: Putative transcription elongation factor S-II-like protein 81R (92 aa).

The TFIIS-type zinc-finger motif lies at 51–91 (GTVKCPGCGSRRVHALQRQTRSADEPMTLFAMCSECGKRWT). Residues Cys-55, Cys-58, Cys-83, and Cys-86 each coordinate Zn(2+).

This chain is Putative transcription elongation factor S-II-like protein 81R, found in Dryophytes versicolor (chameleon treefrog).